The chain runs to 803 residues: Translation initiation factor IF-2 (803 aa).

2 disordered regions span residues 95–125 (PVVEQKRETEPAPTQEVPLTSDTTNLNEKAE) and 138–178 (EVKE…EREE). Positions 111–121 (VPLTSDTTNLN) are enriched in polar residues. Over residues 138–155 (EVKEEAKKTPSEKKETPK) the composition is skewed to basic and acidic residues. Residues 156-167 (KGPRKETRRSRK) show a composition bias toward basic residues. The span at 168-178 (PDKEDKWEREE) shows a compositional bias: basic and acidic residues. A tr-type G domain is found at 302–471 (PRAPVVTIMG…LLQAEVLELK (170 aa)). The segment at 311-318 (GHVDHGKT) is G1. GTP is bound at residue 311-318 (GHVDHGKT). The interval 336 to 340 (GITQH) is G2. Residues 357-360 (DTPG) form a G3 region. GTP-binding positions include 357-361 (DTPGH) and 411-414 (NKID). The segment at 411-414 (NKID) is G4. Residues 447–449 (SAK) are G5.

Belongs to the TRAFAC class translation factor GTPase superfamily. Classic translation factor GTPase family. IF-2 subfamily.

Its subcellular location is the cytoplasm. One of the essential components for the initiation of protein synthesis. Protects formylmethionyl-tRNA from spontaneous hydrolysis and promotes its binding to the 30S ribosomal subunits. Also involved in the hydrolysis of GTP during the formation of the 70S ribosomal complex. This chain is Translation initiation factor IF-2, found in Coxiella burnetii (strain CbuK_Q154) (Coxiella burnetii (strain Q154)).